A 909-amino-acid chain; its full sequence is UPF0182 protein H16_A1615 (909 aa).

The next 7 membrane-spanning stretches (helical) occupy residues 16 to 36 (TWVV…GLVV), 58 to 78 (ALLF…SGWL), 114 to 134 (VAVL…AIAL), 169 to 189 (WLLL…GLRG), 205 to 225 (ATHG…SYWL), 246 to 266 (VHVG…AAAA), and 281 to 301 (AAAL…PALF).

The protein belongs to the UPF0182 family.

The protein resides in the cell membrane. The chain is UPF0182 protein H16_A1615 from Cupriavidus necator (strain ATCC 17699 / DSM 428 / KCTC 22496 / NCIMB 10442 / H16 / Stanier 337) (Ralstonia eutropha).